We begin with the raw amino-acid sequence, 659 residues long: Protein kinase byr2 (659 aa).

The 64-residue stretch at 4–67 (YTSKEVAEWL…LKQRDYLREF (64 aa)) folds into the SAM domain. A compositionally biased stretch (low complexity) spans 180–190 (PKLSSVLPTST). 2 disordered regions span residues 180–209 (PKLS…YQRP) and 354–387 (SFSP…EEDT). Positions 354–365 (SFSPGSSPSFIE) are enriched in polar residues. Positions 367-380 (PSPISPTSTTSEDT) are enriched in low complexity. Positions 394 to 658 (WIRGALIGSG…ASELLSHPFV (265 aa)) constitute a Protein kinase domain. Residues 400-408 (IGSGSFGQV) and Lys423 each bind ATP. Catalysis depends on Asp522, which acts as the Proton acceptor.

The protein belongs to the protein kinase superfamily. STE Ser/Thr protein kinase family. MAP kinase kinase kinase subfamily. As to quaternary structure, interacts with rad24 and rad25; these prevent its translocation to the cell membrane during nitrogen starvation.

The protein localises to the cytoplasm. It is found in the cell membrane. It catalyses the reaction L-seryl-[protein] + ATP = O-phospho-L-seryl-[protein] + ADP + H(+). It carries out the reaction L-threonyl-[protein] + ATP = O-phospho-L-threonyl-[protein] + ADP + H(+). Its function is as follows. Serine/threonine protein kinase involved in conjugation and sporulation. It is thought that it phosphorylates the byr1 protein kinase which itself phosphorylate the spk1 kinase. This is Protein kinase byr2 from Schizosaccharomyces pombe (strain 972 / ATCC 24843) (Fission yeast).